A 233-amino-acid polypeptide reads, in one-letter code: Octanoyltransferase (233 aa).

One can recognise a BPL/LPL catalytic domain in the interval Ala-38 to Leu-218. The span at Arg-57 to Leu-66 shows a compositional bias: basic and acidic residues. The segment at Arg-57–Gly-77 is disordered. Substrate-binding positions include Arg-76–His-83, Ala-148–Gly-150, and Gly-161–Ala-163. Cys-179 serves as the catalytic Acyl-thioester intermediate.

This sequence belongs to the LipB family.

It localises to the cytoplasm. The catalysed reaction is octanoyl-[ACP] + L-lysyl-[protein] = N(6)-octanoyl-L-lysyl-[protein] + holo-[ACP] + H(+). It functions in the pathway protein modification; protein lipoylation via endogenous pathway; protein N(6)-(lipoyl)lysine from octanoyl-[acyl-carrier-protein]: step 1/2. Catalyzes the transfer of endogenously produced octanoic acid from octanoyl-acyl-carrier-protein onto the lipoyl domains of lipoate-dependent enzymes. Lipoyl-ACP can also act as a substrate although octanoyl-ACP is likely to be the physiological substrate. The chain is Octanoyltransferase from Mycobacterium avium (strain 104).